The primary structure comprises 160 residues: uncharacterized protein (160 aa).

This is an uncharacterized protein from Magallana gigas (Pacific oyster).